The following is a 182-amino-acid chain: NADH-dependent FAD reductase (182 aa).

Asp-16 is an NAD(+) binding site. Residues 47–48 (NS), 62–64 (CVG), and His-98 each bind FAD. His-143 lines the NAD(+) pocket.

This sequence belongs to the non-flavoprotein flavin reductase family. In terms of assembly, homodimer.

It carries out the reaction FADH2 + NAD(+) = FAD + NADH + 2 H(+). It functions in the pathway antibiotic biosynthesis. Its activity is regulated as follows. The SgcE6-SgcC hydroxylation activity decreases in the presence of excess FAD. Reductase component of a two-component system involved in the biosynthesis of the enediyne antitumor antibiotic C-1027. SgcE6 provides the FADH(2) required by both the halogenase SgcC3 and the monooxygenase SgcC through free diffusion. Accepts only NADH and FAD as substrates. In Streptomyces globisporus, this protein is NADH-dependent FAD reductase.